Reading from the N-terminus, the 149-residue chain is Large ribosomal subunit protein bL9 (149 aa).

This sequence belongs to the bacterial ribosomal protein bL9 family.

Functionally, binds to the 23S rRNA. This Legionella pneumophila subsp. pneumophila (strain Philadelphia 1 / ATCC 33152 / DSM 7513) protein is Large ribosomal subunit protein bL9.